The sequence spans 821 residues: MTDTGREGLQNREEGFELPLMSLREVVMFPRSIVPLFVGREASIKAIESAISDYGKKIFLVAQREPELEKPGPEDLFEVGTVSKILQLLRLPDGTIKVLFEGLYRARWDGTADAIIGADDAYPRVRVTRIEQESSEDDDEALVRATHEALDEYGKINKKLAQETLVAISALSDAARLADAIMPHLKVDYRRKQELLEVESGAERLEKVYELLQGEIAVASLEKRIKSRVKNQMERNQREYYLNEQIKAIHKEMGREDDPQAEVNELEARLAEKSMPEEAREKALREMKKLRQMPPSSAEYTVVRNYVDWILDLPWNTLKETEIDIDNARSILDADHYGLEKPKERILEYLAVQKLVNRLKGPILCLVGPPGVGKTSLAKSVAKATGREFVRLSLGGVRDEAEIRGHRRTYVGALPGKIIQSLKRVKHNNPLFCLDEIDKMSTDFRGDPSSALLEVLDPEQNSTFNDHYLDMDYDLSQVFFITTANSLHSIPLPLQDRMEIIRLPGYLETEKRRIAHDFLLPKQVEAHGLAASNLRISDNAVLEIIRSYTREAGVRNLEREIASVCRKAAMQVVEAGDKEKTLTVSRQNLGNFLGVKKYRHGEREDTSQVGVCTGLAWTEMGGELLVVETALMPGSGRVEITGKLGDVMTESAKAALSYLRSRSDLFGLRPDFHKEIDIHVHVPEGATPKDGPSAGITLATSMVSALLGIPVRNDVAMTGEITLRGRVLPIGGLREKLLAAHRGQIGKVLVPRENEKDLKEVPGEILKGLEIVFVDHVDEVLPQALMAQAESIFGGRTQSTPLYAKLRKDAQDGGATMPTAQ.

Residues 18–216 form the Lon N-terminal domain; it reads LPLMSLREVV…KVYELLQGEI (199 aa). Position 368–375 (368–375) interacts with ATP; that stretch reads GPPGVGKT. One can recognise a Lon proteolytic domain in the interval 606–787; sequence TSQVGVCTGL…DEVLPQALMA (182 aa). Catalysis depends on residues serine 693 and lysine 736.

It belongs to the peptidase S16 family. In terms of assembly, homohexamer. Organized in a ring with a central cavity.

It is found in the cytoplasm. It catalyses the reaction Hydrolysis of proteins in presence of ATP.. ATP-dependent serine protease that mediates the selective degradation of mutant and abnormal proteins as well as certain short-lived regulatory proteins. Required for cellular homeostasis and for survival from DNA damage and developmental changes induced by stress. Degrades polypeptides processively to yield small peptide fragments that are 5 to 10 amino acids long. Binds to DNA in a double-stranded, site-specific manner. This Nitratidesulfovibrio vulgaris (strain ATCC 29579 / DSM 644 / CCUG 34227 / NCIMB 8303 / VKM B-1760 / Hildenborough) (Desulfovibrio vulgaris) protein is Lon protease.